The primary structure comprises 358 residues: UDP-N-acetylglucosamine--N-acetylmuramyl-(pentapeptide) pyrophosphoryl-undecaprenol N-acetylglucosamine transferase (358 aa).

Residues 11-13, asparagine 120, arginine 161, serine 188, and glutamine 282 contribute to the UDP-N-acetyl-alpha-D-glucosamine site; that span reads TGG.

It belongs to the glycosyltransferase 28 family. MurG subfamily.

It localises to the cell inner membrane. It catalyses the reaction di-trans,octa-cis-undecaprenyl diphospho-N-acetyl-alpha-D-muramoyl-L-alanyl-D-glutamyl-meso-2,6-diaminopimeloyl-D-alanyl-D-alanine + UDP-N-acetyl-alpha-D-glucosamine = di-trans,octa-cis-undecaprenyl diphospho-[N-acetyl-alpha-D-glucosaminyl-(1-&gt;4)]-N-acetyl-alpha-D-muramoyl-L-alanyl-D-glutamyl-meso-2,6-diaminopimeloyl-D-alanyl-D-alanine + UDP + H(+). It participates in cell wall biogenesis; peptidoglycan biosynthesis. Functionally, cell wall formation. Catalyzes the transfer of a GlcNAc subunit on undecaprenyl-pyrophosphoryl-MurNAc-pentapeptide (lipid intermediate I) to form undecaprenyl-pyrophosphoryl-MurNAc-(pentapeptide)GlcNAc (lipid intermediate II). The chain is UDP-N-acetylglucosamine--N-acetylmuramyl-(pentapeptide) pyrophosphoryl-undecaprenol N-acetylglucosamine transferase from Synechococcus sp. (strain CC9902).